The primary structure comprises 453 residues: Growth/differentiation factor 9 (453 aa).

The first 27 residues, 1–27 (MALPNKFFLWFCCFAWLCFPISLDSLP), serve as a signal peptide directing secretion. Residues 28 to 318 (SRGEAQIVAR…EGVRSSRHRR (291 aa)) constitute a propeptide that is removed on maturation. 4 N-linked (GlcNAc...) asparagine glycosylation sites follow: asparagine 163, asparagine 236, asparagine 255, and asparagine 269. The segment at 282-328 (LHPKRKPSQGPDQRRELSAYPVGEEAAEGVRSSRHRRDQESVSSELK) is disordered. Basic and acidic residues predominate over residues 318 to 328 (RDQESVSSELK). The N-linked (GlcNAc...) asparagine glycan is linked to asparagine 337. 3 disulfide bridges follow: cysteine 352/cysteine 418, cysteine 381/cysteine 450, and cysteine 385/cysteine 452.

It belongs to the TGF-beta family. Homodimer or heterodimer (Potential). But, in contrast to other members of this family, cannot be disulfide-linked. Post-translationally, phosphorylated; phosphorylation is critical for GDF9 function.

The protein localises to the secreted. Its function is as follows. Required for ovarian folliculogenesis. This is Growth/differentiation factor 9 (GDF9) from Capra hircus (Goat).